We begin with the raw amino-acid sequence, 314 residues long: uncharacterized protein (314 aa).

It to M.leprae ML0607.

This is an uncharacterized protein from Mycobacterium bovis (strain ATCC BAA-935 / AF2122/97).